The chain runs to 291 residues: MTAFDADLRSLAAQTTLSRRTVIATSLATGFALAVQPVAAQTTIATDANGLIAGEVKIPMQDGVIPAYRAMPAEGGPFPTILVVQEIFGVHEHIKDVCRRLAKLGYFALAPELYARQGDVSTLTNIQQIVSEVVSKVPDAQVMSDLDAAVAFAKGTGKADTARLGITGFCWGGRITWLYAAHNPAVKAGVAWYGRLVGDSSALMPKNPVDVAADLKAPVLGLYGGADQGIPVATIDRMKEACRAAGKTCDFVVYPEAGHAFHADYRPSYRAEPAQDGWKRLQDWFRQYGVA.

A signal peptide spans 1 to 40 (MTAFDADLRSLAAQTTLSRRTVIATSLATGFALAVQPVAA). Residues C170, D227, and H259 contribute to the active site.

The protein belongs to the dienelactone hydrolase family.

It catalyses the reaction 2-(5-oxo-2,5-dihydrofuran-2-ylidene)acetate + H2O = 4-oxohex-2-enedioate + H(+). This Methylorubrum extorquens (strain ATCC 14718 / DSM 1338 / JCM 2805 / NCIMB 9133 / AM1) (Methylobacterium extorquens) protein is Putative carboxymethylenebutenolidase.